The sequence spans 321 residues: Ribosomal RNA small subunit methyltransferase H (321 aa).

Residues 29-31 (GGH), aspartate 48, tyrosine 76, aspartate 97, and glutamine 104 each bind S-adenosyl-L-methionine. Positions 277-321 (LTRGAEPASETEKAENPRAASVRLRAVERTAPNPDHTRKPTGGAS) are disordered.

It belongs to the methyltransferase superfamily. RsmH family.

It localises to the cytoplasm. The catalysed reaction is cytidine(1402) in 16S rRNA + S-adenosyl-L-methionine = N(4)-methylcytidine(1402) in 16S rRNA + S-adenosyl-L-homocysteine + H(+). Its function is as follows. Specifically methylates the N4 position of cytidine in position 1402 (C1402) of 16S rRNA. This is Ribosomal RNA small subunit methyltransferase H from Frankia casuarinae (strain DSM 45818 / CECT 9043 / HFP020203 / CcI3).